We begin with the raw amino-acid sequence, 211 residues long: Protein-L-isoaspartate O-methyltransferase (211 aa).

Residue Ser60 is part of the active site.

Belongs to the methyltransferase superfamily. L-isoaspartyl/D-aspartyl protein methyltransferase family.

The protein resides in the cytoplasm. The catalysed reaction is [protein]-L-isoaspartate + S-adenosyl-L-methionine = [protein]-L-isoaspartate alpha-methyl ester + S-adenosyl-L-homocysteine. Catalyzes the methyl esterification of L-isoaspartyl residues in peptides and proteins that result from spontaneous decomposition of normal L-aspartyl and L-asparaginyl residues. It plays a role in the repair and/or degradation of damaged proteins. The protein is Protein-L-isoaspartate O-methyltransferase of Pseudomonas fluorescens (strain ATCC BAA-477 / NRRL B-23932 / Pf-5).